The following is an 84-amino-acid chain: Sec-independent protein translocase protein TatA (84 aa).

The helical transmembrane segment at 1–21 (MGGLQPWHWLIVIAVFVLLFG) threads the bilayer. Positions 46–84 (MQSDSNAAKSDQPEQITSERVVVDPSTQSTSSNSDKRPA) are disordered. The segment covering 48 to 63 (SDSNAAKSDQPEQITS) has biased composition (polar residues).

The protein belongs to the TatA/E family. In terms of assembly, the Tat system comprises two distinct complexes: a TatABC complex, containing multiple copies of TatA, TatB and TatC subunits, and a separate TatA complex, containing only TatA subunits. Substrates initially bind to the TatABC complex, which probably triggers association of the separate TatA complex to form the active translocon.

It is found in the cell membrane. Functionally, part of the twin-arginine translocation (Tat) system that transports large folded proteins containing a characteristic twin-arginine motif in their signal peptide across membranes. TatA could form the protein-conducting channel of the Tat system. This chain is Sec-independent protein translocase protein TatA, found in Mycolicibacterium gilvum (strain PYR-GCK) (Mycobacterium gilvum (strain PYR-GCK)).